Here is a 265-residue protein sequence, read N- to C-terminus: Undecaprenyl-diphosphatase (265 aa).

Transmembrane regions (helical) follow at residues 38 to 58 (RSDF…CLAL), 75 to 95 (RDYV…GLIV), 108 to 128 (PVAW…HFAG), 135 to 155 (VVTW…GVFP), 181 to 201 (FVFM…LLEM), 215 to 235 (VAVA…WLLG), and 244 to 264 (VFAV…PAAA).

The protein belongs to the UppP family.

The protein resides in the cell inner membrane. The catalysed reaction is di-trans,octa-cis-undecaprenyl diphosphate + H2O = di-trans,octa-cis-undecaprenyl phosphate + phosphate + H(+). Functionally, catalyzes the dephosphorylation of undecaprenyl diphosphate (UPP). Confers resistance to bacitracin. This is Undecaprenyl-diphosphatase from Xanthomonas euvesicatoria pv. vesicatoria (strain 85-10) (Xanthomonas campestris pv. vesicatoria).